Here is a 1078-residue protein sequence, read N- to C-terminus: Isoleucine--tRNA ligase (1078 aa).

Residues 52–62 carry the 'HIGH' region motif; it reads PTANGKPALHH. A 'KMSKS' region motif is present at residues 637 to 641; the sequence is KMSKS. An ATP-binding site is contributed by lysine 640.

The protein belongs to the class-I aminoacyl-tRNA synthetase family. IleS type 2 subfamily. In terms of assembly, monomer. The cofactor is Zn(2+).

It is found in the cytoplasm. It catalyses the reaction tRNA(Ile) + L-isoleucine + ATP = L-isoleucyl-tRNA(Ile) + AMP + diphosphate. Functionally, catalyzes the attachment of isoleucine to tRNA(Ile). As IleRS can inadvertently accommodate and process structurally similar amino acids such as valine, to avoid such errors it has two additional distinct tRNA(Ile)-dependent editing activities. One activity is designated as 'pretransfer' editing and involves the hydrolysis of activated Val-AMP. The other activity is designated 'posttransfer' editing and involves deacylation of mischarged Val-tRNA(Ile). The chain is Isoleucine--tRNA ligase from Deinococcus radiodurans (strain ATCC 13939 / DSM 20539 / JCM 16871 / CCUG 27074 / LMG 4051 / NBRC 15346 / NCIMB 9279 / VKM B-1422 / R1).